A 141-amino-acid chain; its full sequence is MAKKVEKLVKLQIPAGKATPAPPVGPALGQAGINIMGFTKEFNARTADQAGMIIPVVISVYEDKSFTFVTKTPPAAVLLKKAAGVEKGSGEPNKTKVATVTRAQVQEIAETKMPDLNAANIESAMRMIEGTARSMGFTVVD.

This sequence belongs to the universal ribosomal protein uL11 family. In terms of assembly, part of the ribosomal stalk of the 50S ribosomal subunit. Interacts with L10 and the large rRNA to form the base of the stalk. L10 forms an elongated spine to which L12 dimers bind in a sequential fashion forming a multimeric L10(L12)X complex. Post-translationally, one or more lysine residues are methylated.

Its function is as follows. Forms part of the ribosomal stalk which helps the ribosome interact with GTP-bound translation factors. This is Large ribosomal subunit protein uL11 from Streptococcus sanguinis (strain SK36).